The primary structure comprises 104 residues: Large ribosomal subunit protein bL21 (104 aa).

This sequence belongs to the bacterial ribosomal protein bL21 family. In terms of assembly, part of the 50S ribosomal subunit. Contacts protein L20.

Its function is as follows. This protein binds to 23S rRNA in the presence of protein L20. The protein is Large ribosomal subunit protein bL21 of Leptospira interrogans serogroup Icterohaemorrhagiae serovar copenhageni (strain Fiocruz L1-130).